Consider the following 61-residue polypeptide: Odorranain-A6 (61 aa).

The signal sequence occupies residues 1 to 22; the sequence is MFSMKKSLLLLFFLGTISLSLC. Residues 23-45 constitute a propeptide that is removed on maturation; sequence EQERDAEEEEGSENGAEDIKINR.

The protein belongs to the frog skin active peptide (FSAP) family. Brevinin subfamily. As to expression, expressed by the skin glands.

Its subcellular location is the secreted. The sequence is that of Odorranain-A6 from Odorrana hainanensis (Odor frog).